We begin with the raw amino-acid sequence, 116 residues long: MSNIIKQIEQEQLKQNVPSFRPGDTLEVKVWVVEGSKRRLQAFEGVVIAIRHRGLHSAFTLRKISNGVGVERVFQTHSPIIDSITVKRKGAVRKAKLYYLRERSGKSARIKERLGN.

The protein belongs to the bacterial ribosomal protein bL19 family.

Its function is as follows. This protein is located at the 30S-50S ribosomal subunit interface and may play a role in the structure and function of the aminoacyl-tRNA binding site. The protein is Large ribosomal subunit protein bL19 of Histophilus somni (strain 129Pt) (Haemophilus somnus).